Here is a 419-residue protein sequence, read N- to C-terminus: Structure-specific endonuclease subunit slx4 (419 aa).

It belongs to the SLX4 family. In terms of assembly, forms a heterodimer with slx1. Post-translationally, phosphorylated in response to DNA damage.

The protein resides in the nucleus. It is found in the nucleolus. Regulatory subunit of the slx1-slx4 structure-specific endonuclease that resolves DNA secondary structures generated during DNA repair and recombination. Has endonuclease activity towards branched DNA substrates, introducing single-strand cuts in duplex DNA close to junctions with ss-DNA. Has a preference for stem-loop (SL) and splayed arm Y structures. Introduces a single-strand cut in duplex DNA on the 3' side of a double-strand/single-strand junction with respect to the single-strand moving 3' to 5' away from the junction. Plays a critical role in maintaining the integrity of the ribosomal DNA (rDNA) loci, where it has a role in re-starting stalled replication forks. The complex initiates homologous recombination (HR) events, used to maintain rDNA copy number, in the rDNA repeats that are processed by a mechanism that requires rad22, but not rhp51. Has Holliday junction resolvase activity in vitro. Slx4 is required for efficient processing of DNA substrates. This is Structure-specific endonuclease subunit slx4 from Schizosaccharomyces pombe (strain 972 / ATCC 24843) (Fission yeast).